The sequence spans 237 residues: Ribosomal RNA small subunit methyltransferase G (237 aa).

S-adenosyl-L-methionine is bound by residues Gly78, Phe83, 129 to 130 (AE), and Arg148.

Belongs to the methyltransferase superfamily. RNA methyltransferase RsmG family.

Its subcellular location is the cytoplasm. Functionally, specifically methylates the N7 position of a guanine in 16S rRNA. This chain is Ribosomal RNA small subunit methyltransferase G, found in Clostridium kluyveri (strain ATCC 8527 / DSM 555 / NBRC 12016 / NCIMB 10680 / K1).